Here is a 476-residue protein sequence, read N- to C-terminus: Membrane-bound lytic murein transglycosylase F (476 aa).

A signal peptide spans 1–15 (MRSFLLILFCVSLLT). The interval 16 to 258 (GCQGERVDAA…HLNEKYFAHV (243 aa)) is non-LT domain. The LT domain stretch occupies residues 259 to 476 (KRFDYVDTRA…QSEISAAQPN (218 aa)). The active site involves Glu-303. The tract at residues 456 to 476 (EAQQQTAEKQSQSEISAAQPN) is disordered.

This sequence in the N-terminal section; belongs to the bacterial solute-binding protein 3 family. It in the C-terminal section; belongs to the transglycosylase Slt family.

It localises to the cell outer membrane. The enzyme catalyses Exolytic cleavage of the (1-&gt;4)-beta-glycosidic linkage between N-acetylmuramic acid (MurNAc) and N-acetylglucosamine (GlcNAc) residues in peptidoglycan, from either the reducing or the non-reducing ends of the peptidoglycan chains, with concomitant formation of a 1,6-anhydrobond in the MurNAc residue.. Functionally, murein-degrading enzyme that degrades murein glycan strands and insoluble, high-molecular weight murein sacculi, with the concomitant formation of a 1,6-anhydromuramoyl product. Lytic transglycosylases (LTs) play an integral role in the metabolism of the peptidoglycan (PG) sacculus. Their lytic action creates space within the PG sacculus to allow for its expansion as well as for the insertion of various structures such as secretion systems and flagella. The chain is Membrane-bound lytic murein transglycosylase F from Shewanella loihica (strain ATCC BAA-1088 / PV-4).